Reading from the N-terminus, the 293-residue chain is Homoserine kinase (293 aa).

83–93 provides a ligand contact to ATP; sequence PITRGMGSSSA.

It belongs to the GHMP kinase family. Homoserine kinase subfamily.

Its subcellular location is the cytoplasm. The catalysed reaction is L-homoserine + ATP = O-phospho-L-homoserine + ADP + H(+). The protein operates within amino-acid biosynthesis; L-threonine biosynthesis; L-threonine from L-aspartate: step 4/5. Catalyzes the ATP-dependent phosphorylation of L-homoserine to L-homoserine phosphate. The polypeptide is Homoserine kinase (Helicobacter pylori (strain ATCC 700392 / 26695) (Campylobacter pylori)).